Consider the following 515-residue polypeptide: MSREKYYITTAIAYPNGKPHIGHAYELIATDAMARFQRLNGMDVYFLTGTDEHGIKMLQSARKEGITPRELADRNTSAFRRMAEVLNSSNDDYIRTSEERHYKASQVIWQAMVANGDIYKGGYAGWYSVRDEAYYGEEETEVRADGVRYGPQGTPVEWVEEESYFFRLSAYQDKLLDLYENNPGFIMPAERRNEIVSFVKSGLKDLSISRTTFDWGIPVPGDEKHVMYVWVDALTNYITALGYPDTTDERWAYWPANAHIIGKDISRFHAVYWPAFLMSAQLPLPKRVFAHGFLFNRGEKMSKSVGNVIDPFELVERYGLDQLRYFLMREVPFGQDGSYSHEAIVNRTNADLANDLGNLAQRSLSMIAKNCEGKVPQPGAFSEADKAILDQADAALETARKAMDDQALHLALGAIFAVVAEANRYFAGQEPWALRKTDPARMGTVLYVTAEVLRRVGIMVQPFIPQSAEKLLDILAAPADKRQFADVLASPLAGGTDLPAPQPVFPRYVEADEQN.

The short motif at 13–23 (AYPNGKPHIGH) is the 'HIGH' region element. The 'KMSKS' region signature appears at 300–304 (KMSKS). Lys303 is an ATP binding site.

This sequence belongs to the class-I aminoacyl-tRNA synthetase family. MetG type 2B subfamily. In terms of assembly, monomer.

The protein localises to the cytoplasm. It carries out the reaction tRNA(Met) + L-methionine + ATP = L-methionyl-tRNA(Met) + AMP + diphosphate. Its function is as follows. Is required not only for elongation of protein synthesis but also for the initiation of all mRNA translation through initiator tRNA(fMet) aminoacylation. This is Methionine--tRNA ligase from Brucella melitensis biotype 1 (strain ATCC 23456 / CCUG 17765 / NCTC 10094 / 16M).